Here is a 540-residue protein sequence, read N- to C-terminus: Coatomer subunit delta (540 aa).

Residues 169-263 form a disordered region; that stretch reads RHEEMLRGKR…GMILGGKSGT (95 aa). Residues 179-197 are compositionally biased toward gly residues; that stretch reads SGGYTGISGGGGMGSGGMG. Positions 212 to 229 are enriched in low complexity; that stretch reads NNNNNNNNNNNNNNNNNN. Residues 238–250 show a composition bias toward polar residues; the sequence is SPNTSRPSAASSG. Residues 251–261 are compositionally biased toward gly residues; that stretch reads SQGGMILGGKS. Residues 304-540 form the MHD domain; that stretch reads QEGVHITVEE…TLSVDTYEIK (237 aa).

The protein belongs to the adaptor complexes medium subunit family. Delta-COP subfamily. Oligomeric complex that consists of at least the alpha, beta, beta', gamma, delta, epsilon and zeta subunits.

Its subcellular location is the cytoplasm. It localises to the golgi apparatus membrane. It is found in the cytoplasmic vesicle. The protein localises to the COPI-coated vesicle membrane. Its function is as follows. The coatomer is a cytosolic protein complex that binds to dilysine motifs and reversibly associates with Golgi non-clathrin-coated vesicles, which further mediate biosynthetic protein transport from the ER, via the Golgi up to the trans Golgi network. Coatomer complex is required for budding from Golgi membranes, and is essential for the retrograde Golgi-to-ER transport of dilysine-tagged proteins. The polypeptide is Coatomer subunit delta (copd) (Dictyostelium discoideum (Social amoeba)).